Reading from the N-terminus, the 1722-residue chain is Leucine-rich repeat- and IQ domain-containing protein 1 (1722 aa).

4 disordered regions span residues 23-47, 182-202, 265-285, and 319-367; these read SLEK…TDSV, EDKE…QFQE, RTRF…QQNN, and QEWK…YEEK. The span at 38-47 shows a compositional bias: acidic residues; it reads QSDDSDTDSV. Residues 265 to 278 show a composition bias toward basic and acidic residues; sequence RTRFKDQQEKEKNS. In terms of domain architecture, IQ 1 spans 283–312; that stretch reads QNNAAVKIQAKYKAFVAYQKYGPIIKEQIE. LRR repeat units lie at residues 819–840, 841–861, 862–883, 884–905, 970–991, 992–1013, 1014–1035, 1036–1057, 1060–1081, and 1082–1103; these read NLQF…SNCK, KLKY…ENLE, NLCV…DGCT, NIQC…FFLE, NLQQ…CDTP, TIVY…ENCG, LLQI…ENLV, LLRE…SSYW, LLQN…FHFV, and SLEK…IKWF. Residues 1117–1157 enclose the LRRCT domain; that stretch reads NPLLQETNWRDSLLKVLPALRILNGNILNSNSESRTEEHNQ. 2 consecutive IQ domains span residues 1335 to 1364 and 1395 to 1424; these read KIMA…LHTA and REKA…AIKN. The span at 1506–1524 shows a compositional bias: polar residues; sequence SEHTQFNSRSENKTSSWTP. Positions 1506-1534 are disordered; the sequence is SEHTQFNSRSENKTSSWTPESKTSRKSLL.

This chain is Leucine-rich repeat- and IQ domain-containing protein 1 (LRRIQ1), found in Homo sapiens (Human).